A 917-amino-acid polypeptide reads, in one-letter code: Serine/arginine repetitive matrix protein 1 (917 aa).

Met1 is modified (N-acetylmethionine). A necessary for DNA and RNA-binding region spans residues 1 to 151 (MDAGFFRGTS…ASMKKQDEDK (151 aa)). The segment at 1–156 (MDAGFFRGTS…QDEDKDKRDK (156 aa)) is necessary for mRNA 3'-end cleavage and cytoplasmic accumulation. A Citrulline modification is found at Arg7. A PWI domain is found at 27-126 (QLKFAECLEK…AGIPSAFLEL (100 aa)). Lys127 participates in a covalent cross-link: Glycyl lysine isopeptide (Lys-Gly) (interchain with G-Cter in SUMO2). The segment covering 139-170 (EKLASMKKQDEDKDKRDKEEKESSREKRERSR) has biased composition (basic and acidic residues). Residues 139–917 (EKLASMKKQD…MRKAQVSPQS (779 aa)) form a disordered region. The residue at position 140 (Lys140) is an N6-acetyllysine. A compositionally biased stretch (basic residues) spans 171-207 (SPRRRKSRSPSPRRRSSPVRRERKRSHSRSPRHRTKS). A compositionally biased stretch (basic and acidic residues) spans 214–234 (PEKKEKTPELPEPSVKVKEPS). Phosphothreonine is present on Thr220. The residue at position 227 (Ser227) is a Phosphoserine. Residue Lys231 forms a Glycyl lysine isopeptide (Lys-Gly) (interchain with G-Cter in SUMO1); alternate linkage. Lys231 participates in a covalent cross-link: Glycyl lysine isopeptide (Lys-Gly) (interchain with G-Cter in SUMO2); alternate. Phosphoserine is present on residues Ser234 and Ser240. Position 241 is a phosphothreonine (Thr241). Basic and acidic residues predominate over residues 246–275 (KVPKPEPIPEPKEPSPEKNSKKEKEKEKTR). Lys249 is covalently cross-linked (Glycyl lysine isopeptide (Lys-Gly) (interchain with G-Cter in SUMO2)). At Ser260 the chain carries Phosphoserine. Basic residues-rich tracts occupy residues 276–329 (PRSR…RTPP) and 336–351 (PRHRRSRSPVRRRRRS). A necessary for speckles and matrix localization region spans residues 300-702 (RRHRSRSRSY…NKRHSPSPRP (403 aa)). Residues 352 to 368 (SASLSGSSSSSSSSRSR) show a composition bias toward low complexity. Phosphoserine is present on residues Ser389, Ser391, Ser393, and Ser402. Position 406 is a phosphothreonine (Thr406). The residue at position 414 (Ser414) is a Phosphoserine. Residue Thr416 is modified to Phosphothreonine. Phosphoserine is present on residues Ser420, Ser429, Ser431, and Ser436. Over residues 428 to 438 (VSVSPGRTSGK) the composition is skewed to polar residues. Lys447 is covalently cross-linked (Glycyl lysine isopeptide (Lys-Gly) (interchain with G-Cter in SUMO2)). 2 positions are modified to phosphoserine: Ser450 and Ser452. Residue Lys459 forms a Glycyl lysine isopeptide (Lys-Gly) (interchain with G-Cter in SUMO2) linkage. 2 positions are modified to phosphoserine: Ser463 and Ser465. Residue Lys472 forms a Glycyl lysine isopeptide (Lys-Gly) (interchain with G-Cter in SUMO2) linkage. The residue at position 478 (Ser478) is a Phosphoserine. A compositionally biased stretch (low complexity) spans 478–501 (SVQQRRQYRRQNQQSSSDSGSSSS). Over residues 503–518 (EDERPKRSHVKNGEVG) the composition is skewed to basic and acidic residues. 7 positions are modified to phosphoserine: Ser524, Ser526, Ser528, Ser530, Ser532, Ser563, and Ser565. Over residues 557–574 (SGRRRRSPSPPPTRRRRS) the composition is skewed to basic residues. Thr569 bears the Phosphothreonine mark. Residues Ser574 and Ser576 each carry the phosphoserine modification. A compositionally biased stretch (basic residues) spans 581–606 (PRRRRTPTPPPRRRTPSPPPRRRSPS). Residues Thr586, Thr588, and Thr595 each carry the phosphothreonine modification. Ser597 carries the phosphoserine modification. Over residues 607 to 619 (PRRYSPPIQRRYS) the composition is skewed to low complexity. A Phosphotyrosine modification is found at Tyr610. Residues Ser611, Ser619, and Ser621 each carry the phosphoserine modification. Thr628 carries the phosphothreonine modification. Phosphoserine occurs at positions 630, 640, 642, 650, and 652. Residues 635 to 650 (PKRRASPSPPPKRRVS) show a composition bias toward basic residues. A compositionally biased stretch (basic residues) spans 663 to 677 (TKRRSPSLSSKHRKG). The segment covering 699-713 (SPRPRAPQTSSPPPV) has biased composition (pro residues). Phosphoserine is present on residues Ser708, Ser709, Ser718, Ser720, Ser726, and Ser728. Composition is skewed to low complexity over residues 714 to 732 (RRGASSSPQRRQSPSPSTR), 749 to 772 (AASPSPQSVRRVSSSRSVSGSPEP), and 782 to 799 (SPVQSQSPSTNWSPAVPV). Thr731 bears the Phosphothreonine mark. Phosphoserine occurs at positions 751, 753, 761, 765, 767, 769, 782, 786, 788, and 790. The residue at position 791 (Thr791) is a Phosphothreonine. A phosphoserine mark is found at Ser794 and Ser804. A Phosphothreonine modification is found at Thr806. 3 positions are modified to phosphoserine: Ser808, Ser810, and Ser815. Over residues 822-847 (KKKKKKKDKKHKKDKKHKKHKKHKKE) the composition is skewed to basic residues. Low complexity predominate over residues 850-879 (VAAAAAAAVTPAAIAAATTTLAQEEPVAAP). A Glycyl lysine isopeptide (Lys-Gly) (interchain with G-Cter in SUMO2) cross-link involves residue Lys882. The residue at position 885 (Thr885) is a Phosphothreonine. Ser887 carries the post-translational modification Phosphoserine. Residues 895-905 (DLEKHLREKAL) are compositionally biased toward basic and acidic residues. Ser914 carries the post-translational modification Phosphoserine.

It belongs to the splicing factor SR family. As to quaternary structure, identified in the spliceosome C complex. Found in a pre-mRNA splicing complex with SFRS4, SFRS5, SNRP70, SNRPA1, SRRM1 and SRRM2. Component of the minor spliceosome, which splices U12-type introns. Found in a pre-mRNA exonic splicing enhancer (ESE) complex with SNRP70, SNRPA1, SRRM1 and TRA2B/SFRS10. Found in a mRNA splicing-dependent exon junction complex (EJC) with DEK, PRPF8, NCBP1, RBM8A, RNPS1, SRRM1 and ALYREF/THOC4. Interacts with DDX39B, CPSF1, RBM8A, RNPS1, and ALYREF/THOC4. Seems to be a compound of RNA export complexes that are released from speckles in a ATP-dependent manner. Post-translationally, phosphorylated on multiple serine and threonine residues by DYRK3 during the G2-to-M transition, after the nuclear-envelope breakdown. Phosphorylation by DYRK3 promotes disassembly of nuclear speckles. Citrullinated by PADI4.

Its function is as follows. Part of pre- and post-splicing multiprotein mRNP complexes. As a component of the minor spliceosome, involved in the splicing of U12-type introns in pre-mRNAs. Involved in numerous pre-mRNA processing events. Promotes constitutive and exonic splicing enhancer (ESE)-dependent splicing activation by bridging together sequence-specific (SR family proteins, SFRS4, SFRS5 and TRA2B/SFRS10) and basal snRNP (SNRP70 and SNRPA1) factors of the spliceosome. Stimulates mRNA 3'-end cleavage independently of the formation of an exon junction complex. Binds both pre-mRNA and spliced mRNA 20-25 nt upstream of exon-exon junctions. Binds RNA and DNA with low sequence specificity and has similar preference for either double- or single-stranded nucleic acid substrates. The protein is Serine/arginine repetitive matrix protein 1 (SRRM1) of Pongo abelii (Sumatran orangutan).